The primary structure comprises 409 residues: MRQALLERFLRYIKIDTQSDGKNLESPSTPSQFEFAKLLKLELEELGFHRVELSDKGYLSASVPKTIEGVPCIGFIAHLDTAPDFSGANVTPQLINDYDGSEIKLGEDEVLSPELFPHMLKYLGKTLITTDGTSLLGGDDKAGISEIITALHYLLEHPEIPHGEIRLCFTPDEEIGRGADHFDVPEFGAQWAYTIDGGQLGELEFENFNAATAVITAKGNNCHPGTAYGVMVNAQTMAARFHAKMPLHDTPEGSKDYDGFFHLINMQGQTEEAELTYIIRDFDLELFEKRKTWLTERVKSYNADLVLGSLEIEITDSYFNMKEQILPYPHIIDIAEKAITNQGVTPLIKPIRGGTDGSRLSYMGLPCPNIFTGGHNFHGKHEYICLESMEKAVDVIIDICKLTAEEQQA.

His-78 is a Zn(2+) binding site. The active site involves Asp-80. Asp-139 is a Zn(2+) binding site. Catalysis depends on Glu-173, which acts as the Proton acceptor. 3 residues coordinate Zn(2+): Glu-174, Asp-196, and His-378.

This sequence belongs to the peptidase M20B family. Zn(2+) is required as a cofactor.

It is found in the cytoplasm. The enzyme catalyses Release of the N-terminal residue from a tripeptide.. Its function is as follows. Cleaves the N-terminal amino acid of tripeptides. The polypeptide is Peptidase T (Shewanella sediminis (strain HAW-EB3)).